Consider the following 161-residue polypeptide: Putative HTH-type transcriptional regulator MT1325 (161 aa).

The HTH rrf2-type domain occupies 2–132; that stretch reads RMSAKAEYAV…EETTLADVAG (131 aa).

This is Putative HTH-type transcriptional regulator MT1325 from Mycobacterium tuberculosis (strain CDC 1551 / Oshkosh).